The chain runs to 889 residues: Potassium/sodium hyperpolarization-activated cyclic nucleotide-gated channel 2 (889 aa).

A compositionally biased stretch (gly residues) spans 1–10 (MDARGGGGRP). A disordered region spans residues 1 to 159 (MDARGGGGRP…GPAGEPRGSQ (159 aa)). At 1–215 (MDARGGGGRP…PYSDFRFYWD (215 aa)) the chain is on the cytoplasmic side. Pro residues predominate over residues 17–55 (TPAPGPPPPPPPAPPQQQPPPPPPPAPPPGPGPAPPQHP). The segment covering 129-155 (GAASGPAPGPGPAEEAGSEEAGPAGEP) has biased composition (low complexity). A phosphoserine mark is found at serine 146 and serine 161. An involved in subunit assembly region spans residues 158–209 (SQASFMQRQFGALLQPGVNKFSLRMFGSQKAVEREQERVKSAGAWIIHPYSD). A helical membrane pass occupies residues 216-236 (FTMLLFMVGNLIIIPVGITFF). Residues 237–240 (KDET) are Extracellular-facing. Residues 241-261 (TAPWIVFNVVSDTFFLMDLVL) traverse the membrane as a helical segment. Residues 262–288 (NFRTGIVIEDNTEIILDPEKIKKKYLR) lie on the Cytoplasmic side of the membrane. The chain crosses the membrane as a helical span at residues 289–309 (TWFVVDFVSSIPVDYIFLIVE). Residues 310–317 (KGIDSEVY) are Extracellular-facing. The chain crosses the membrane as a helical; Voltage-sensor span at residues 318–338 (KTARALRIVRFTKILSLLRLL). Topologically, residues 339-369 (RLSRLIRYIHQWEEIFHMTYDLASAVMRICN) are cytoplasmic. The helical transmembrane segment at 370–390 (LISMMLLLCHWDGCLQFLVPM) threads the bilayer. The Extracellular portion of the chain corresponds to 391 to 413 (LQDFPRNCWVSINGMVNHSWSEL). N-linked (GlcNAc...) asparagine glycosylation occurs at asparagine 407. Positions 414-435 (YSFALFKAMSHMLCIGYGRQAP) form an intramembrane region, pore-forming. At 436-440 (ESMTD) the chain is on the extracellular side. Residues 441–461 (IWLTMLSMIVGATCYAMFIGH) form a helical membrane-spanning segment. At 462–889 (ATALIQSLDS…SARSRLSSNL (428 aa)) the chain is on the cytoplasmic side. Methionine 599, glycine 608, glutamate 609, isoleucine 610, cysteine 611, arginine 618, threonine 619, and arginine 659 together coordinate 3',5'-cyclic AMP. Serine 668 carries the post-translational modification Phosphoserine; by PKG/PRKG2. Serine 754 carries the phosphoserine modification. A disordered region spans residues 754 to 889 (SPRLVRRPPP…SARSRLSSNL (136 aa)). Arginine 756 is modified (omega-N-methylarginine). Residues 760-784 (RPPPGPAPAAASPGPPPPASPPGAP) are compositionally biased toward pro residues. Serine 771, serine 779, serine 786, serine 866, and serine 868 each carry phosphoserine. Low complexity predominate over residues 785-860 (ASPRAPRTSP…TPAARAAAPS (76 aa)).

Belongs to the potassium channel HCN family. Homotetramer. The channel is composed of a homo- or heterotetrameric complex of pore-forming subunits. Heterotetramer with HCN1. Forms an obligate 4:4 complex with accessory subunit PEX5L. Interacts with KCNE2. Post-translationally, phosphorylation at Ser-668 by PRKG2 shifts the voltage-dependence to more negative voltages, hence counteracting the stimulatory effect of cGMP on gating. S-palmitoylated. In terms of processing, N-glycosylated; required for cell surface trafficking of HCN2. In terms of tissue distribution, highly expressed throughout the brain. Detected at low levels in heart.

It localises to the cell membrane. It catalyses the reaction Na(+)(in) = Na(+)(out). It carries out the reaction K(+)(in) = K(+)(out). The catalysed reaction is NH4(+)(in) = NH4(+)(out). Activated by cAMP, and at 10-100 times higher concentrations, also by cGMP. cAMP binding causes a conformation change that leads to the assembly of an active tetramer and channel opening. Binding of cAMP removes a tonic inhibition conferred by cyclic nucleotide-binding domain (CNBD) on channel opening. Channel activity is modulated by intracellular chloride ions and pH; acidic pH shifts the activation to more negative voltages. Inhibited by extracellular cesium ions. In terms of biological role, hyperpolarization-activated ion channel that is permeable to sodium and potassium ions. Displays lower selectivity for K(+) over Na(+) ions. Contributes to the native pacemaker currents in heart (If) and in neurons (Ih). Can also transport ammonium in the distal nephron. Involved in the initiation of neuropathic pain in sensory neurons. This Homo sapiens (Human) protein is Potassium/sodium hyperpolarization-activated cyclic nucleotide-gated channel 2.